The following is a 155-amino-acid chain: HTH-type transcriptional repressor MdtR (155 aa).

The 137-residue stretch at 4–140 (ADQLMSDIQL…AAHITAKLAQ (137 aa)) folds into the HTH marR-type domain. The H-T-H motif DNA-binding region spans 54-77 (VSEIAERMEVKPSAVTLMADRLEQ).

Homodimer.

It localises to the cytoplasm. Its activity is regulated as follows. The binding of MdtR to the mdtRP promoter region is severely inhibited by adding excess concentrations of fusidic acid or novobiocin but not by actinomycin or streptomycin. Functionally, repressor of the multidrug resistance operon mdtRP. Acts by binding directly to the mdtRP promoter region, leading to the repression of its expression. This chain is HTH-type transcriptional repressor MdtR, found in Bacillus subtilis (strain 168).